Reading from the N-terminus, the 568-residue chain is O-fucosyltransferase 9 (568 aa).

A compositionally biased stretch (low complexity) spans Met-1–Pro-19. Residues Met-1–Arg-33 are disordered. A helical; Signal-anchor for type II membrane protein membrane pass occupies residues Leu-65 to Phe-85. 4 N-linked (GlcNAc...) asparagine glycosylation sites follow: Asn-125, Asn-151, Asn-189, and Asn-243. His-336 to Arg-338 is a binding site for substrate. N-linked (GlcNAc...) asparagine glycans are attached at residues Asn-408 and Asn-409.

Belongs to the glycosyltransferase GT106 family.

The protein localises to the membrane. The protein operates within glycan metabolism. This is O-fucosyltransferase 9 from Arabidopsis thaliana (Mouse-ear cress).